The sequence spans 207 residues: Large ribosomal subunit protein uL4 (207 aa).

It belongs to the universal ribosomal protein uL4 family. Part of the 50S ribosomal subunit.

Functionally, one of the primary rRNA binding proteins, this protein initially binds near the 5'-end of the 23S rRNA. It is important during the early stages of 50S assembly. It makes multiple contacts with different domains of the 23S rRNA in the assembled 50S subunit and ribosome. Forms part of the polypeptide exit tunnel. The sequence is that of Large ribosomal subunit protein uL4 from Rickettsia conorii (strain ATCC VR-613 / Malish 7).